A 298-amino-acid chain; its full sequence is RNA exonuclease 4 (298 aa).

Residues 1–73 are a coiled coil; it reads MRKTVRKNKQ…EAKLKLKSAT (73 aa). Residues 125 to 275 enclose the Exonuclease domain; sequence FFSIDCKIIE…RDTIINVILY (151 aa).

It belongs to the REXO4 family.

It is found in the nucleus. This is RNA exonuclease 4 (rexo4) from Dictyostelium discoideum (Social amoeba).